Reading from the N-terminus, the 310-residue chain is Protoheme IX farnesyltransferase 2 (310 aa).

Transmembrane regions (helical) follow at residues 21 to 41 (IWYL…GIYG), 46 to 66 (IATW…ANVL), 99 to 119 (FGLF…LTTT), 125 to 145 (WAAA…SYML), 153 to 173 (IVLG…AVTT), 180 to 200 (GLVM…ALTL), 226 to 246 (VIAV…LITL), 256 to 276 (VYLA…AWVV), and 284 to 304 (AWVL…ALMV).

It belongs to the UbiA prenyltransferase family. Protoheme IX farnesyltransferase subfamily.

It localises to the cell membrane. It carries out the reaction heme b + (2E,6E)-farnesyl diphosphate + H2O = Fe(II)-heme o + diphosphate. The protein operates within porphyrin-containing compound metabolism; heme O biosynthesis; heme O from protoheme: step 1/1. Functionally, converts heme B (protoheme IX) to heme O by substitution of the vinyl group on carbon 2 of heme B porphyrin ring with a hydroxyethyl farnesyl side group. This chain is Protoheme IX farnesyltransferase 2, found in Cenarchaeum symbiosum (strain A).